The primary structure comprises 1382 residues: DNA-directed RNA polymerase subunit beta' (1382 aa).

Cys70, Cys72, Cys85, and Cys88 together coordinate Zn(2+). Residues Asp460, Asp462, and Asp464 each contribute to the Mg(2+) site. 4 residues coordinate Zn(2+): Cys808, Cys882, Cys889, and Cys892.

It belongs to the RNA polymerase beta' chain family. The RNAP catalytic core consists of 2 alpha, 1 beta, 1 beta' and 1 omega subunit. When a sigma factor is associated with the core the holoenzyme is formed, which can initiate transcription. The cofactor is Mg(2+). Requires Zn(2+) as cofactor.

It catalyses the reaction RNA(n) + a ribonucleoside 5'-triphosphate = RNA(n+1) + diphosphate. Functionally, DNA-dependent RNA polymerase catalyzes the transcription of DNA into RNA using the four ribonucleoside triphosphates as substrates. The polypeptide is DNA-directed RNA polymerase subunit beta' (Geobacter sp. (strain M21)).